The chain runs to 29 residues: Cyclotide mra2 (29 aa).

Disulfide bonds link C4/C19, C8/C21, and C13/C26.

In terms of processing, this is a cyclic peptide. Contains 3 disulfide bonds.

Its function is as follows. Probably participates in a plant defense mechanism. This is Cyclotide mra2 from Melicytus ramiflorus (Whitey wood).